Reading from the N-terminus, the 382-residue chain is MANQGQRVSWGDESTKIRGRSNSRGRKINNIPLSFFNPITLQQGAKFWNSCPRDFVPKGIGNRDQQIGYWNRQTRYRMVKGQRKELPERWFFYYLGTGPHADAKFKDKLDGVVWVAKDGAMNKPTTLGSRGANNESKALKFDGKVPGEFQLEVNQSRDNSRSRSQSRSRSRNRSQSRGRQQSNNKKDDSVEQAVLAALKKLGVYTEKQQQRSRSKSKERSNSKTRDTTPKNENKHTWKRTAGKGDVTRFYGARSSSANFGDSDLVANGSSAKHYPQLAECVPSVSSILFGSYWTSKEDGDQIEVTFTHKYHLPKDHPKTEQFLQQINAYACPSEVAKEQRKRKSRSKSAERSEQEVVPDSLIENYTDVFDDTQVEMIDEVTN.

Disordered stretches follow at residues 1–24 (MANQ…SNSR), 150–190 (QLEV…DDSV), and 202–240 (GVYT…WKRT). Phosphoserine; by host is present on serine 9. The 123-residue stretch at 31-153 (IPLSFFNPIT…KVPGEFQLEV (123 aa)) folds into the CoV N NTD domain. An RNA-binding region spans residues 33–159 (LSFFNPITLQ…QLEVNQSRDN (127 aa)). Positions 154–163 (NQSRDNSRSR) are enriched in low complexity. Serine 156 is subject to Phosphoserine; by host. Basic residues predominate over residues 164-176 (SQSRSRSRNRSQS). A compositionally biased stretch (basic and acidic residues) spans 215–235 (KSKERSNSKTRDTTPKNENKH). The CoV N CTD domain maps to 224–337 (TRDTTPKNEN…AYACPSEVAK (114 aa)). The interval 231–334 (NENKHTWKRT…QINAYACPSE (104 aa)) is dimerization. Residues serine 254 and serine 256 each carry the phosphoserine; by host modification. The interval 334–362 (EVAKEQRKRKSRSKSAERSEQEVVPDSLI) is disordered.

This sequence belongs to the alphacoronavirus nucleocapsid protein family. As to quaternary structure, homooligomer. Both monomeric and oligomeric forms interact with RNA. Interacts with protein M. Interacts with NSP3; this interaction serves to tether the genome to the newly translated replicase-transcriptase complex at a very early stage of infection. Post-translationally, ADP-ribosylated. The ADP-ribosylation is retained in the virion during infection. Phosphorylated on serine and threonine residues.

It localises to the virion. Its subcellular location is the host endoplasmic reticulum-Golgi intermediate compartment. The protein resides in the host Golgi apparatus. Functionally, packages the positive strand viral genome RNA into a helical ribonucleocapsid (RNP) and plays a fundamental role during virion assembly through its interactions with the viral genome and membrane protein M. Plays an important role in enhancing the efficiency of subgenomic viral RNA transcription as well as viral replication. This chain is Nucleoprotein, found in Porcine respiratory coronavirus (strain 86/137004 / isolate British) (PRCoV).